Consider the following 284-residue polypeptide: Protoheme IX farnesyltransferase (284 aa).

9 helical membrane-spanning segments follow: residues 13 to 33 (VTVL…TGYP), 35 to 55 (LTVI…SFIL), 84 to 104 (FALL…TYFI), 106 to 126 (LLTA…YTIW), 134 to 154 (NIVI…AAMA), 163 to 183 (VMFL…AIFL), 205 to 225 (VNQI…FYFV), 229 to 249 (MGYL…GFAY), and 264 to 284 (FFFS…DSKI).

Belongs to the UbiA prenyltransferase family. Protoheme IX farnesyltransferase subfamily.

It is found in the cell inner membrane. The enzyme catalyses heme b + (2E,6E)-farnesyl diphosphate + H2O = Fe(II)-heme o + diphosphate. Its pathway is porphyrin-containing compound metabolism; heme O biosynthesis; heme O from protoheme: step 1/1. Its function is as follows. Converts heme B (protoheme IX) to heme O by substitution of the vinyl group on carbon 2 of heme B porphyrin ring with a hydroxyethyl farnesyl side group. This chain is Protoheme IX farnesyltransferase, found in Leptospira biflexa serovar Patoc (strain Patoc 1 / Ames).